The sequence spans 1438 residues: DNA polymerase III PolC-type (1438 aa).

The Exonuclease domain occupies 422-578; the sequence is YVVFDVETTG…YDTESTAYIF (157 aa).

The protein belongs to the DNA polymerase type-C family. PolC subfamily.

The protein resides in the cytoplasm. The enzyme catalyses DNA(n) + a 2'-deoxyribonucleoside 5'-triphosphate = DNA(n+1) + diphosphate. Functionally, required for replicative DNA synthesis. This DNA polymerase also exhibits 3' to 5' exonuclease activity. The sequence is that of DNA polymerase III PolC-type from Staphylococcus haemolyticus (strain JCSC1435).